Reading from the N-terminus, the 321-residue chain is Peptidase 1 (321 aa).

Residues 1 to 18 (MKFVLAIASLLVLSTVYA) form the signal peptide. A propeptide spans 19–98 (RPASIKTFEE…LKTQFDLNAE (80 aa)) (activation peptide). Intrachain disulfides connect Cys102/Cys216, Cys130/Cys170, and Cys164/Cys202. Cys133 is a catalytic residue. Asn151 carries N-linked (GlcNAc...) asparagine glycosylation. Catalysis depends on residues His269 and Arg288.

It belongs to the peptidase C1 family. As to quaternary structure, monomer.

It is found in the secreted. The catalysed reaction is Broad endopeptidase specificity.. Functionally, thiol protease that hydrolyzes proteins, with a preference for Phe or basic residues. This Dermatophagoides farinae (American house dust mite) protein is Peptidase 1 (DERF1).